The sequence spans 82 residues: RNA-binding protein YbxF (82 aa).

The protein belongs to the eukaryotic ribosomal protein eL8 family.

The polypeptide is RNA-binding protein YbxF (Geobacillus stearothermophilus (Bacillus stearothermophilus)).